The chain runs to 132 residues: Small ribosomal subunit protein uS12 (132 aa).

The residue at position 89 (Asp89) is a 3-methylthioaspartic acid. Residues Gly106 to Lys132 are disordered. The segment covering Asp109–Lys120 has biased composition (basic residues).

Belongs to the universal ribosomal protein uS12 family. Part of the 30S ribosomal subunit. Contacts proteins S8 and S17. May interact with IF1 in the 30S initiation complex.

Functionally, with S4 and S5 plays an important role in translational accuracy. Interacts with and stabilizes bases of the 16S rRNA that are involved in tRNA selection in the A site and with the mRNA backbone. Located at the interface of the 30S and 50S subunits, it traverses the body of the 30S subunit contacting proteins on the other side and probably holding the rRNA structure together. The combined cluster of proteins S8, S12 and S17 appears to hold together the shoulder and platform of the 30S subunit. The polypeptide is Small ribosomal subunit protein uS12 (rpsL) (Thermus thermophilus (strain ATCC BAA-163 / DSM 7039 / HB27)).